Consider the following 324-residue polypeptide: Glyoxylate/hydroxypyruvate reductase B (324 aa).

Active-site residues include arginine 237 and glutamate 266. Catalysis depends on histidine 285, which acts as the Proton donor.

It belongs to the D-isomer specific 2-hydroxyacid dehydrogenase family. GhrB subfamily. As to quaternary structure, homodimer.

It is found in the cytoplasm. It catalyses the reaction glycolate + NADP(+) = glyoxylate + NADPH + H(+). The enzyme catalyses (R)-glycerate + NAD(+) = 3-hydroxypyruvate + NADH + H(+). The catalysed reaction is (R)-glycerate + NADP(+) = 3-hydroxypyruvate + NADPH + H(+). Its function is as follows. Catalyzes the NADPH-dependent reduction of glyoxylate and hydroxypyruvate into glycolate and glycerate, respectively. This Escherichia coli (strain SMS-3-5 / SECEC) protein is Glyoxylate/hydroxypyruvate reductase B.